The following is a 994-amino-acid chain: Sarcoplasmic/endoplasmic reticulum calcium ATPase 1 (994 aa).

Over 1 to 48 (MEQAHTKTTEECLAYFGVNENTGLSLDQVKKNFDKFGPNELPAEEGKS) the chain is Cytoplasmic. A helical membrane pass occupies residues 49 to 69 (LWELVAEQFEDLLVRILLLAA). The Lumenal portion of the chain corresponds to 70–89 (IISFVLAWFEEGEETVTAFV). A helical transmembrane segment spans residues 90 to 110 (EPFVILLILIANAVVGVWQER). Topologically, residues 111–253 (NAEDAIEALK…QEKTPLQQKL (143 aa)) are cytoplasmic. The chain crosses the membrane as a helical span at residues 254 to 273 (DEFGEQLSKVISLICVAVWL). Topologically, residues 274-295 (INIGHFNDPIHGGSWIKGAIYY) are lumenal. A helical transmembrane segment spans residues 296–313 (FKIAVALAVAAIPEGLPA). Ca(2+)-binding residues include valine 304, alanine 305, isoleucine 307, and glutamate 309. Over 314–757 (VITTCLALGT…EEGRAIYNNM (444 aa)) the chain is Cytoplasmic. Aspartate 351 (4-aspartylphosphate intermediate) is an active-site residue. Mg(2+)-binding residues include aspartate 351 and threonine 353. ATP contacts are provided by threonine 353, glutamate 442, arginine 489, lysine 515, arginine 560, threonine 625, glycine 626, aspartate 627, arginine 678, and lysine 684. Aspartate 703 lines the Mg(2+) pocket. Residue asparagine 706 participates in ATP binding. The chain crosses the membrane as a helical span at residues 758-777 (KQFIRYLISSNVGEVVCIFL). 2 residues coordinate Ca(2+): asparagine 768 and glutamate 771. Residues 778-787 (TAALGLPEAL) are Lumenal-facing. A helical transmembrane segment spans residues 788 to 808 (IPVQLLWVNLVTDGLPATALG). The interaction with PLN stretch occupies residues 788–808 (IPVQLLWVNLVTDGLPATALG). 3 residues coordinate Ca(2+): asparagine 796, threonine 799, and aspartate 800. The Cytoplasmic portion of the chain corresponds to 809–828 (FNPPDLDIMDRPPRSPKEPL). A helical membrane pass occupies residues 829–851 (ISGWLFFRYMAIGGYVGAATVGA). Residues 852 to 897 (AAWWFMYADDGPNVTFYQLSHFMQCTEDNPDFEGHECEIFESPVPM) are Lumenal-facing. Cysteines 876 and 888 form a disulfide. The helical transmembrane segment at 898–917 (TMALSVLVTIEMCNALNSLS) threads the bilayer. Glutamate 908 provides a ligand contact to Ca(2+). Over 918-930 (ENQSLIRMPPWSN) the chain is Cytoplasmic. A helical membrane pass occupies residues 931 to 949 (FWLLGSICLSMSLHFLILY). The segment at 932–943 (WLLGSICLSMSL) is interaction with PLN. Residues 950–964 (VEPLPMIFKLTPLNV) are Lumenal-facing. Residues 965-985 (EQWFIVLKMSFPVILLDELLK) traverse the membrane as a helical segment. The Cytoplasmic segment spans residues 986-994 (FVARNYLEG).

This sequence belongs to the cation transport ATPase (P-type) (TC 3.A.3) family. Type IIA subfamily. Interacts with sarcolipin (SLN). Interacts with phospholamban (PLN). Interacts with myoregulin (MRLN). Interacts with DWORF. Interacts with VMP1. It depends on Mg(2+) as a cofactor.

The protein resides in the endoplasmic reticulum membrane. Its subcellular location is the sarcoplasmic reticulum membrane. The enzyme catalyses Ca(2+)(in) + ATP + H2O = Ca(2+)(out) + ADP + phosphate + H(+). Inhibited by sarcolipin (SLN) and myoregulin (MRLN). Also shown to be inhibited by phospholamban (PLN) in vitro. Enhanced by DWORF; DWORF increases activity by displacing sarcolipin (SLN), phospholamban (PLN) and myoregulin (MRLN). Its function is as follows. Key regulator of striated muscle performance by acting as the major Ca(2+) ATPase responsible for the reuptake of cytosolic Ca(2+) into the sarcoplasmic reticulum. Catalyzes the hydrolysis of ATP coupled with the translocation of calcium from the cytosol to the sarcoplasmic reticulum lumen. Contributes to calcium sequestration involved in muscular excitation/contraction. The chain is Sarcoplasmic/endoplasmic reticulum calcium ATPase 1 (ATP2A1) from Pelophylax lessonae (Pool frog).